The sequence spans 201 residues: ATP-dependent Clp protease proteolytic subunit (201 aa).

Serine 98 functions as the Nucleophile in the catalytic mechanism. The active site involves histidine 123.

The protein belongs to the peptidase S14 family. In terms of assembly, fourteen ClpP subunits assemble into 2 heptameric rings which stack back to back to give a disk-like structure with a central cavity, resembling the structure of eukaryotic proteasomes.

Its subcellular location is the cytoplasm. The catalysed reaction is Hydrolysis of proteins to small peptides in the presence of ATP and magnesium. alpha-casein is the usual test substrate. In the absence of ATP, only oligopeptides shorter than five residues are hydrolyzed (such as succinyl-Leu-Tyr-|-NHMec, and Leu-Tyr-Leu-|-Tyr-Trp, in which cleavage of the -Tyr-|-Leu- and -Tyr-|-Trp bonds also occurs).. Its function is as follows. Cleaves peptides in various proteins in a process that requires ATP hydrolysis. Has a chymotrypsin-like activity. Plays a major role in the degradation of misfolded proteins. This chain is ATP-dependent Clp protease proteolytic subunit, found in Rickettsia canadensis (strain McKiel).